Reading from the N-terminus, the 254-residue chain is UPF0246 protein FTH_1656 (254 aa).

This sequence belongs to the UPF0246 family.

The sequence is that of UPF0246 protein FTH_1656 from Francisella tularensis subsp. holarctica (strain OSU18).